A 3303-amino-acid polypeptide reads, in one-letter code: Protein unc-80 homolog (3303 aa).

Positions 1 to 37 (MVTNAAGTAATGGATSNTTNNNNLQTNNNSHGANNNN) are enriched in low complexity. The segment at 1–43 (MVTNAAGTAATGGATSNTTNNNNLQTNNNSHGANNNNDDFDFD) is disordered. Residues 202 to 222 (LFSVPTITLFVYLFAPIIHHL) traverse the membrane as a helical segment. Disordered regions lie at residues 284–316 (LSAD…VSSP), 361–422 (LQQQ…SESI), 491–512 (LYQG…KDYI), 526–546 (AEEP…KKKR), 1036–1067 (FRRR…SERN), 1443–1563 (LHEP…DDTA), and 1627–1671 (VEPT…KDRI). The span at 361–377 (LQQQQSQSRRGSRQSMN) shows a compositional bias: low complexity. 2 stretches are compositionally biased toward basic and acidic residues: residues 378-391 (SRDK…KFEF) and 401-422 (SMKE…SESI). Positions 495 to 505 (PGSNSRDSPGS) are enriched in polar residues. A compositionally biased stretch (polar residues) spans 1058 to 1067 (SDSTSSSERN). The span at 1490–1499 (FKRRSLKLRR) shows a compositional bias: basic residues. The segment covering 1546-1556 (DDQQPESPTDS) has biased composition (polar residues). Residues 1660-1671 (KRKDSLSRKDRI) show a composition bias toward basic and acidic residues. 3 consecutive transmembrane segments (helical) span residues 1969-1989 (VYEI…ALFL), 2018-2038 (LPQQ…MFYV), and 2048-2068 (LVGS…GIMF). 3 disordered regions span residues 2518-2550 (NGPY…FEEE), 3003-3158 (EEKR…FKAQ), and 3170-3262 (FRHS…YRDN). Basic and acidic residues predominate over residues 3003–3018 (EEKRYDRESSEQKKSD). Polar residues-rich tracts occupy residues 3033 to 3053 (QRPS…SHSH) and 3071 to 3106 (PSDT…SQSG). Positions 3124–3134 (SGHGSGGGIGT) are enriched in gly residues. Positions 3135–3152 (GAASAVPSHLSHSQSLQQ) are enriched in low complexity. The segment covering 3198–3217 (SRLQRSKAASRKTFRLKRSR) has biased composition (basic residues). A compositionally biased stretch (polar residues) spans 3226–3239 (IVTSQEEQAPQAQA). The segment covering 3246-3257 (SWDSVSQTSSTS) has biased composition (low complexity).

The protein belongs to the unc-80 family. In terms of assembly, interacts with unc79 and na. Can interact with unc79 independently of na.

It is found in the membrane. In terms of biological role, component of the na (narrow abdomen) sodium channel complex. In the circadian clock neurons it functions with na and unc79 to promote circadian rhythmicity. The protein is Protein unc-80 homolog of Drosophila melanogaster (Fruit fly).